The sequence spans 197 residues: Protein GrpE (197 aa).

Basic and acidic residues predominate over residues 1–27 (MTKQEKAENQEKPTEETVEETPKKETP). A disordered region spans residues 1-50 (MTKQEKAENQEKPTEETVEETPKKETPFEPVMEADEVEETTEAQAPVEEA). Positions 32-41 (MEADEVEETT) are enriched in acidic residues.

This sequence belongs to the GrpE family. Homodimer.

The protein localises to the cytoplasm. Functionally, participates actively in the response to hyperosmotic and heat shock by preventing the aggregation of stress-denatured proteins, in association with DnaK and GrpE. It is the nucleotide exchange factor for DnaK and may function as a thermosensor. Unfolded proteins bind initially to DnaJ; upon interaction with the DnaJ-bound protein, DnaK hydrolyzes its bound ATP, resulting in the formation of a stable complex. GrpE releases ADP from DnaK; ATP binding to DnaK triggers the release of the substrate protein, thus completing the reaction cycle. Several rounds of ATP-dependent interactions between DnaJ, DnaK and GrpE are required for fully efficient folding. The chain is Protein GrpE from Latilactobacillus sakei (Lactobacillus sakei).